A 483-amino-acid polypeptide reads, in one-letter code: Rhamnulokinase (483 aa).

Residue 11 to 15 (ASSGR) participates in ATP binding. Substrate-binding positions include Gly-79 and 234-236 (HDT). The active-site Proton acceptor is the Asp-235. Thr-257 serves as a coordination point for ATP. Asn-294 lines the substrate pocket. Gln-302 serves as a coordination point for ATP. Cys-352 and Cys-369 form a disulfide bridge. Gly-401 lines the ATP pocket.

It belongs to the rhamnulokinase family. Mg(2+) is required as a cofactor.

It catalyses the reaction L-rhamnulose + ATP = L-rhamnulose 1-phosphate + ADP + H(+). Its pathway is carbohydrate degradation; L-rhamnose degradation; glycerone phosphate from L-rhamnose: step 2/3. Its function is as follows. Involved in the catabolism of L-rhamnose (6-deoxy-L-mannose). Catalyzes the transfer of the gamma-phosphate group from ATP to the 1-hydroxyl group of L-rhamnulose to yield L-rhamnulose 1-phosphate. The polypeptide is Rhamnulokinase (Listeria monocytogenes serotype 4b (strain CLIP80459)).